The primary structure comprises 198 residues: Putative pseudouridine methyltransferase (198 aa).

S-adenosyl-L-methionine contacts are provided by L132 and C186.

It belongs to the methyltransferase superfamily. TrmY family.

The protein localises to the cytoplasm. The chain is Putative pseudouridine methyltransferase from Vibrio vulnificus (strain CMCP6).